Here is a 260-residue protein sequence, read N- to C-terminus: tRNA pseudouridine synthase A (260 aa).

Asp52 functions as the Nucleophile in the catalytic mechanism. Tyr110 provides a ligand contact to substrate.

It belongs to the tRNA pseudouridine synthase TruA family. Homodimer.

It catalyses the reaction uridine(38/39/40) in tRNA = pseudouridine(38/39/40) in tRNA. Its function is as follows. Formation of pseudouridine at positions 38, 39 and 40 in the anticodon stem and loop of transfer RNAs. The sequence is that of tRNA pseudouridine synthase A from Spiroplasma kunkelii.